A 442-amino-acid polypeptide reads, in one-letter code: tRNA modification GTPase MnmE (442 aa).

Arginine 27, glutamate 84, and lysine 124 together coordinate (6S)-5-formyl-5,6,7,8-tetrahydrofolate. Residues 221–366 enclose the TrmE-type G domain; the sequence is GFQIVILGAP…LMELISQASA (146 aa). GTP contacts are provided by residues 231–236, 250–256, 275–278, and 329–332; these read NAGKSS, TEEPGTT, DTAG, and NKAD. Serine 235 and threonine 256 together coordinate Mg(2+). Lysine 442 lines the (6S)-5-formyl-5,6,7,8-tetrahydrofolate pocket.

Belongs to the TRAFAC class TrmE-Era-EngA-EngB-Septin-like GTPase superfamily. TrmE GTPase family. As to quaternary structure, homodimer. Heterotetramer of two MnmE and two MnmG subunits. K(+) is required as a cofactor.

Its subcellular location is the cytoplasm. Functionally, exhibits a very high intrinsic GTPase hydrolysis rate. Involved in the addition of a carboxymethylaminomethyl (cmnm) group at the wobble position (U34) of certain tRNAs, forming tRNA-cmnm(5)s(2)U34. This chain is tRNA modification GTPase MnmE, found in Chelativorans sp. (strain BNC1).